A 461-amino-acid chain; its full sequence is Protein IQ-DOMAIN 2 (461 aa).

The tract at residues 1–55 (MGKKAKWFSSVKKAFSPDSKKSKQKLAEGQNGVISNPPVVDNVRQSSSSPPPALA) is disordered. Positions 114–142 (EEAAAILIQTIFRGYLARRALRAMRGLVR) constitute an IQ domain. Residues 141–158 (VRLKLLMEGSVVKRQAAN) form a calmodulin-binding region. Residues 278 to 461 (PLESSEKEQS…GVTVTNGAGS (184 aa)) form a disordered region. The span at 310-345 (LTRNGSTQPNTPSSARGTPRNKNSFFSPPTPSRLNQ) shows a compositional bias: polar residues. A Nuclear localization signal motif is present at residues 425 to 432 (KKRLSYPT).

The protein belongs to the IQD family. In terms of assembly, binds to multiple calmodulin (CaM) in the presence of Ca(2+) and CaM-like proteins.

It is found in the nucleus. The protein resides in the cytoplasm. The protein localises to the cytoskeleton. In terms of biological role, may be involved in cooperative interactions with calmodulins or calmodulin-like proteins. Recruits calmodulin proteins to microtubules, thus being a potential scaffold in cellular signaling and trafficking. May associate with nucleic acids and regulate gene expression at the transcriptional or post-transcriptional level. This is Protein IQ-DOMAIN 2 from Arabidopsis thaliana (Mouse-ear cress).